A 172-amino-acid polypeptide reads, in one-letter code: MTYYNVGKIVNTQGLQGELRVLSVTDFADERFKKKSVLALFDDKDNYIMDVEVASHRKHKNFDIVKFKGLYHINDVEKYKGCSLKIAEENLTDLDDGEFYYHEIIGLDVYEGNTLIGQVKEILQPGANDVWVVKRKGKKDLLLPYIPPVVLDVDVAAGRIEVELMEGLDDED.

Residues 96–168 (DGEFYYHEII…RIEVELMEGL (73 aa)) form the PRC barrel domain.

This sequence belongs to the RimM family. In terms of assembly, binds ribosomal protein uS19.

It is found in the cytoplasm. Functionally, an accessory protein needed during the final step in the assembly of 30S ribosomal subunit, possibly for assembly of the head region. Essential for efficient processing of 16S rRNA. May be needed both before and after RbfA during the maturation of 16S rRNA. It has affinity for free ribosomal 30S subunits but not for 70S ribosomes. This chain is Ribosome maturation factor RimM, found in Streptococcus thermophilus (strain CNRZ 1066).